We begin with the raw amino-acid sequence, 506 residues long: ATP synthase subunit alpha (506 aa).

170 to 177 (GDRQTGKT) lines the ATP pocket.

The protein belongs to the ATPase alpha/beta chains family. F-type ATPases have 2 components, CF(1) - the catalytic core - and CF(0) - the membrane proton channel. CF(1) has five subunits: alpha(3), beta(3), gamma(1), delta(1), epsilon(1). CF(0) has four main subunits: a(1), b(1), b'(1) and c(9-12).

Its subcellular location is the cellular thylakoid membrane. It carries out the reaction ATP + H2O + 4 H(+)(in) = ADP + phosphate + 5 H(+)(out). In terms of biological role, produces ATP from ADP in the presence of a proton gradient across the membrane. The alpha chain is a regulatory subunit. This is ATP synthase subunit alpha from Synechococcus sp. (strain CC9902).